The following is a 161-amino-acid chain: MATDVAFDTSMGSFTVELYNSHAPKTCKNFATLAQRGYYNNVIFHRIIPNFMVQTGDPTGTGRGGSSIYGEKFEDEIRADLKHTGAGILSMANSGPNTNGSQFFVTLAPTPWLDGKHTIFGRVKSGMRVIQRMGLVKTNGEDRPVDEVKIIRARVVEEGEE.

The region spanning 1 to 155 (MATDVAFDTS…DEVKIIRARV (155 aa)) is the PPIase cyclophilin-type domain.

It belongs to the cyclophilin-type PPIase family. PPIL1 subfamily.

The enzyme catalyses [protein]-peptidylproline (omega=180) = [protein]-peptidylproline (omega=0). PPIases accelerate the folding of proteins. It catalyzes the cis-trans isomerization of proline imidic peptide bonds in oligopeptides. The sequence is that of Peptidyl-prolyl cis-trans isomerase-like 1 (cyp1) from Aspergillus oryzae (strain ATCC 42149 / RIB 40) (Yellow koji mold).